The following is a 437-amino-acid chain: UDP-glucosyl transferase 79L3 (437 aa).

Histidine 18 acts as the Proton acceptor in catalysis. Aspartate 117 (charge relay) is an active-site residue. UDP-binding residues include serine 254, tryptophan 312, valine 313, histidine 330, serine 335, and glutamate 338.

This sequence belongs to the UDP-glycosyltransferase family. As to expression, mainly expressed in flowers, flower buds and young leaves, and, to a lesser extent, in old leaves, stems and roots.

Its pathway is secondary metabolite biosynthesis; terpenoid biosynthesis. In terms of biological role, component of the oleanane-type triterpene saponins (e.g. saponarioside A and saponarioside B) biosynthetic pathway, leading to the production of natural products with detergent properties used as traditional sources of soap. A glycosyltransferase that mediates the conversion of QA-triFR to QA-triFRX via the elongation of the C-28 sugar chain with a D-xylose. This chain is UDP-glucosyl transferase 79L3, found in Saponaria officinalis (Common soapwort).